The following is a 56-amino-acid chain: Large ribosomal subunit protein bL32 (56 aa).

The segment covering 1 to 16 (MAVQKNRKTRSKRGMR) has biased composition (basic residues). Residues 1-37 (MAVQKNRKTRSKRGMRRSHDALGTATMSVDSTSGETH) are disordered. The span at 25-35 (ATMSVDSTSGE) shows a compositional bias: polar residues.

It belongs to the bacterial ribosomal protein bL32 family.

This chain is Large ribosomal subunit protein bL32, found in Pseudoalteromonas atlantica (strain T6c / ATCC BAA-1087).